The sequence spans 154 residues: MGRFISVSFGLLVVFLSLSGTGADCPSEWSSHEGHCYKVFKLLKTWEDAEKFCTQQANGWHLASIESVEEANFVAQLASETLTKSKYHAWIGLRDQSKRQQCSSHWTDGSAVSYETVTKYTKCFGLNKETKYHEWITLPCGDKNPFICKSWVLH.

The first 23 residues, 1 to 23 (MGRFISVSFGLLVVFLSLSGTGA), serve as a signal peptide directing secretion. 3 disulfides stabilise this stretch: C25/C36, C53/C148, and C123/C140. One can recognise a C-type lectin domain in the interval 32–149 (HEGHCYKVFK…CGDKNPFICK (118 aa)).

It belongs to the snaclec family. Heterodimer of subunits alpha and beta; disulfide-linked. Expressed by the venom gland.

It localises to the secreted. Functionally, inhibits ristocetin-induced platelet aggregation via binding to platelet glycoprotein Ibalpha (GP1BA). The sequence is that of Snaclec dabocetin subunit alpha from Daboia siamensis (Eastern Russel's viper).